The sequence spans 200 residues: MLIQQLGRQDYVSVWQKMQDFTRQRGGAEDDQLWLVEHYPVYTQGQAGKAEHILNTGNIPVIQIDRGGQITYHGLGQAVIYPLLSLKAANIGIRRFVSLVEETTIALLQDYAVAAHARADAPGVYVADGRKIASLGFKVSRGCSYHGIAINVAMDLSPFLGINPCGLSGMKMAQLSEFVPEIDVDSVHKKWAELFSARWR.

In terms of domain architecture, BPL/LPL catalytic spans 27-200 (GAEDDQLWLV…WAELFSARWR (174 aa)). Substrate contacts are provided by residues 66 to 73 (RGGQITYH), 134 to 136 (SLG), and 147 to 149 (GIA). The active-site Acyl-thioester intermediate is the Cys-165.

Belongs to the LipB family.

Its subcellular location is the cytoplasm. The catalysed reaction is octanoyl-[ACP] + L-lysyl-[protein] = N(6)-octanoyl-L-lysyl-[protein] + holo-[ACP] + H(+). It functions in the pathway protein modification; protein lipoylation via endogenous pathway; protein N(6)-(lipoyl)lysine from octanoyl-[acyl-carrier-protein]: step 1/2. Its function is as follows. Catalyzes the transfer of endogenously produced octanoic acid from octanoyl-acyl-carrier-protein onto the lipoyl domains of lipoate-dependent enzymes. Lipoyl-ACP can also act as a substrate although octanoyl-ACP is likely to be the physiological substrate. The chain is Octanoyltransferase from Dichelobacter nodosus (strain VCS1703A).